Here is a 471-residue protein sequence, read N- to C-terminus: V-type ATP synthase beta chain (471 aa).

This sequence belongs to the ATPase alpha/beta chains family.

Its function is as follows. Produces ATP from ADP in the presence of a proton gradient across the membrane. The V-type beta chain is a regulatory subunit. This is V-type ATP synthase beta chain from Streptococcus pyogenes serotype M18 (strain MGAS8232).